Consider the following 380-residue polypeptide: Probable dual-specificity RNA methyltransferase RlmN (380 aa).

The active-site Proton acceptor is glutamate 123. A Radical SAM core domain is found at 129–362; that stretch reads HEYGNSVCVT…VTIRREQGSD (234 aa). Cysteine 136 and cysteine 367 form a disulfide bridge. Cysteine 143, cysteine 147, and cysteine 150 together coordinate [4Fe-4S] cluster. Residues 193–194, serine 225, 248–250, and asparagine 324 contribute to the S-adenosyl-L-methionine site; these read GE and SLH. Cysteine 367 serves as the catalytic S-methylcysteine intermediate.

Belongs to the radical SAM superfamily. RlmN family. The cofactor is [4Fe-4S] cluster.

It is found in the cytoplasm. The enzyme catalyses adenosine(2503) in 23S rRNA + 2 reduced [2Fe-2S]-[ferredoxin] + 2 S-adenosyl-L-methionine = 2-methyladenosine(2503) in 23S rRNA + 5'-deoxyadenosine + L-methionine + 2 oxidized [2Fe-2S]-[ferredoxin] + S-adenosyl-L-homocysteine. It carries out the reaction adenosine(37) in tRNA + 2 reduced [2Fe-2S]-[ferredoxin] + 2 S-adenosyl-L-methionine = 2-methyladenosine(37) in tRNA + 5'-deoxyadenosine + L-methionine + 2 oxidized [2Fe-2S]-[ferredoxin] + S-adenosyl-L-homocysteine. Functionally, specifically methylates position 2 of adenine 2503 in 23S rRNA and position 2 of adenine 37 in tRNAs. In Lysinibacillus sphaericus (strain C3-41), this protein is Probable dual-specificity RNA methyltransferase RlmN.